A 672-amino-acid chain; its full sequence is tRNA 5-methylaminomethyl-2-thiouridine biosynthesis bifunctional protein MnmC (672 aa).

The segment at 1–243 is tRNA (mnm(5)s(2)U34)-methyltransferase; that stretch reads MTSITHAELG…KREMIAGCME (243 aa). The tract at residues 269–672 is FAD-dependent cmnm(5)s(2)U34 oxidoreductase; that stretch reads IGGGIASAAL…LRKGKAITEL (404 aa).

This sequence in the N-terminal section; belongs to the methyltransferase superfamily. tRNA (mnm(5)s(2)U34)-methyltransferase family. It in the C-terminal section; belongs to the DAO family. FAD is required as a cofactor.

It is found in the cytoplasm. The catalysed reaction is 5-aminomethyl-2-thiouridine(34) in tRNA + S-adenosyl-L-methionine = 5-methylaminomethyl-2-thiouridine(34) in tRNA + S-adenosyl-L-homocysteine + H(+). Functionally, catalyzes the last two steps in the biosynthesis of 5-methylaminomethyl-2-thiouridine (mnm(5)s(2)U) at the wobble position (U34) in tRNA. Catalyzes the FAD-dependent demodification of cmnm(5)s(2)U34 to nm(5)s(2)U34, followed by the transfer of a methyl group from S-adenosyl-L-methionine to nm(5)s(2)U34, to form mnm(5)s(2)U34. The chain is tRNA 5-methylaminomethyl-2-thiouridine biosynthesis bifunctional protein MnmC from Vibrio vulnificus (strain CMCP6).